The primary structure comprises 85 residues: uncharacterized protein (85 aa).

Positions 64–76 (DPPVRRSGGREQH) are enriched in basic and acidic residues. The disordered stretch occupies residues 64–85 (DPPVRRSGGREQHLAQVWRATS).

This is an uncharacterized protein from Mycobacterium bovis (strain ATCC BAA-935 / AF2122/97).